Reading from the N-terminus, the 335-residue chain is Tetraacyldisaccharide 4'-kinase (335 aa).

Position 58–65 (Thr-58–Thr-65) interacts with ATP.

This sequence belongs to the LpxK family.

The enzyme catalyses a lipid A disaccharide + ATP = a lipid IVA + ADP + H(+). The protein operates within glycolipid biosynthesis; lipid IV(A) biosynthesis; lipid IV(A) from (3R)-3-hydroxytetradecanoyl-[acyl-carrier-protein] and UDP-N-acetyl-alpha-D-glucosamine: step 6/6. Transfers the gamma-phosphate of ATP to the 4'-position of a tetraacyldisaccharide 1-phosphate intermediate (termed DS-1-P) to form tetraacyldisaccharide 1,4'-bis-phosphate (lipid IVA). In Shewanella oneidensis (strain ATCC 700550 / JCM 31522 / CIP 106686 / LMG 19005 / NCIMB 14063 / MR-1), this protein is Tetraacyldisaccharide 4'-kinase.